The chain runs to 236 residues: Leucyl/phenylalanyl-tRNA--protein transferase (236 aa).

This sequence belongs to the L/F-transferase family.

The protein resides in the cytoplasm. It catalyses the reaction N-terminal L-lysyl-[protein] + L-leucyl-tRNA(Leu) = N-terminal L-leucyl-L-lysyl-[protein] + tRNA(Leu) + H(+). The catalysed reaction is N-terminal L-arginyl-[protein] + L-leucyl-tRNA(Leu) = N-terminal L-leucyl-L-arginyl-[protein] + tRNA(Leu) + H(+). It carries out the reaction L-phenylalanyl-tRNA(Phe) + an N-terminal L-alpha-aminoacyl-[protein] = an N-terminal L-phenylalanyl-L-alpha-aminoacyl-[protein] + tRNA(Phe). Its function is as follows. Functions in the N-end rule pathway of protein degradation where it conjugates Leu, Phe and, less efficiently, Met from aminoacyl-tRNAs to the N-termini of proteins containing an N-terminal arginine or lysine. The polypeptide is Leucyl/phenylalanyl-tRNA--protein transferase (Shewanella sediminis (strain HAW-EB3)).